The primary structure comprises 673 residues: Transcription initiation factor IIB (673 aa).

The TFIIB-type zinc-finger motif lies at 38-69 (EEIVCPICGSKEVVKDYERAEIVCAKCGCVIK). Zn(2+) is bound by residues Cys-42, Cys-45, Cys-61, and Cys-64. In terms of domain architecture, DOD-type homing endonuclease spans 238–357 (ILGYIIAEGY…VIFLLLQIKE (120 aa)). 2 repeat units span residues 490–573 (SELD…AREL) and 584–665 (DYVP…ELTE).

This sequence belongs to the TFIIB family. This protein undergoes a protein self splicing that involves a post-translational excision of the intervening region (intein) followed by peptide ligation.

In terms of biological role, stabilizes TBP binding to an archaeal box-A promoter. Also responsible for recruiting RNA polymerase II to the pre-initiation complex (DNA-TBP-TFIIB). The protein is Transcription initiation factor IIB (tfb) of Methanocaldococcus jannaschii (strain ATCC 43067 / DSM 2661 / JAL-1 / JCM 10045 / NBRC 100440) (Methanococcus jannaschii).